The chain runs to 147 residues: Transcriptional regulator MraZ (147 aa).

2 consecutive SpoVT-AbrB domains span residues 5–47 (QQLR…SEKE) and 76–123 (TFEI…SKSK).

It belongs to the MraZ family. Forms oligomers.

Its subcellular location is the cytoplasm. It localises to the nucleoid. The chain is Transcriptional regulator MraZ from Mycoplasmopsis synoviae (strain 53) (Mycoplasma synoviae).